A 105-amino-acid chain; its full sequence is UPF0145 protein AHA_2580 (105 aa).

Belongs to the UPF0145 family.

The chain is UPF0145 protein AHA_2580 from Aeromonas hydrophila subsp. hydrophila (strain ATCC 7966 / DSM 30187 / BCRC 13018 / CCUG 14551 / JCM 1027 / KCTC 2358 / NCIMB 9240 / NCTC 8049).